The chain runs to 470 residues: Uronate isomerase (470 aa).

The protein belongs to the metallo-dependent hydrolases superfamily. Uronate isomerase family.

It catalyses the reaction D-glucuronate = D-fructuronate. The catalysed reaction is aldehydo-D-galacturonate = keto-D-tagaturonate. It functions in the pathway carbohydrate metabolism; pentose and glucuronate interconversion. The protein is Uronate isomerase of Salmonella paratyphi A (strain ATCC 9150 / SARB42).